Here is a 384-residue protein sequence, read N- to C-terminus: UDP-4-amino-4-deoxy-L-arabinose--oxoglutarate aminotransferase (384 aa).

K182 bears the N6-(pyridoxal phosphate)lysine mark.

It belongs to the DegT/DnrJ/EryC1 family. ArnB subfamily. Homodimer. The cofactor is pyridoxal 5'-phosphate.

It catalyses the reaction UDP-4-amino-4-deoxy-beta-L-arabinose + 2-oxoglutarate = UDP-beta-L-threo-pentopyranos-4-ulose + L-glutamate. The protein operates within nucleotide-sugar biosynthesis; UDP-4-deoxy-4-formamido-beta-L-arabinose biosynthesis; UDP-4-deoxy-4-formamido-beta-L-arabinose from UDP-alpha-D-glucuronate: step 2/3. Its pathway is bacterial outer membrane biogenesis; lipopolysaccharide biosynthesis. Functionally, catalyzes the conversion of UDP-4-keto-arabinose (UDP-Ara4O) to UDP-4-amino-4-deoxy-L-arabinose (UDP-L-Ara4N). The modified arabinose is attached to lipid A and is required for resistance to polymyxin and cationic antimicrobial peptides. This is UDP-4-amino-4-deoxy-L-arabinose--oxoglutarate aminotransferase from Yersinia pseudotuberculosis serotype O:1b (strain IP 31758).